The sequence spans 229 residues: Large ribosomal subunit protein uL1 (229 aa).

Belongs to the universal ribosomal protein uL1 family. As to quaternary structure, part of the 50S ribosomal subunit.

Its function is as follows. Binds directly to 23S rRNA. The L1 stalk is quite mobile in the ribosome, and is involved in E site tRNA release. Protein L1 is also a translational repressor protein, it controls the translation of the L11 operon by binding to its mRNA. This Thermus thermophilus (strain ATCC BAA-163 / DSM 7039 / HB27) protein is Large ribosomal subunit protein uL1.